The chain runs to 277 residues: Putative phosphoenolpyruvate synthase regulatory protein (277 aa).

ADP is bound at residue G157–T164.

This sequence belongs to the pyruvate, phosphate/water dikinase regulatory protein family. PSRP subfamily.

The enzyme catalyses [pyruvate, water dikinase] + ADP = [pyruvate, water dikinase]-phosphate + AMP + H(+). It carries out the reaction [pyruvate, water dikinase]-phosphate + phosphate + H(+) = [pyruvate, water dikinase] + diphosphate. Bifunctional serine/threonine kinase and phosphorylase involved in the regulation of the phosphoenolpyruvate synthase (PEPS) by catalyzing its phosphorylation/dephosphorylation. The sequence is that of Putative phosphoenolpyruvate synthase regulatory protein from Klebsiella pneumoniae subsp. pneumoniae (strain ATCC 700721 / MGH 78578).